The primary structure comprises 704 residues: Polyribonucleotide nucleotidyltransferase (704 aa).

The Mg(2+) site is built by D485 and D491. The KH domain maps to 552–611; sequence PKTETIQIDPDKIRSVIGAGGKVINKIIQDTGVKIDIKEDGSVFVSSSDHAGVKEAIKII. Residues 621–689 form the S1 motif domain; that stretch reads GEIYLGKVTK…SQGRINLSRK (69 aa).

Belongs to the polyribonucleotide nucleotidyltransferase family. Mg(2+) is required as a cofactor.

It localises to the cytoplasm. It carries out the reaction RNA(n+1) + phosphate = RNA(n) + a ribonucleoside 5'-diphosphate. Involved in mRNA degradation. Catalyzes the phosphorolysis of single-stranded polyribonucleotides processively in the 3'- to 5'-direction. In Clostridium botulinum (strain Eklund 17B / Type B), this protein is Polyribonucleotide nucleotidyltransferase.